The sequence spans 102 residues: Large ribosomal subunit protein bL21 (102 aa).

This sequence belongs to the bacterial ribosomal protein bL21 family. As to quaternary structure, part of the 50S ribosomal subunit. Contacts protein L20.

This protein binds to 23S rRNA in the presence of protein L20. The polypeptide is Large ribosomal subunit protein bL21 (Saccharopolyspora erythraea (strain ATCC 11635 / DSM 40517 / JCM 4748 / NBRC 13426 / NCIMB 8594 / NRRL 2338)).